The following is a 427-amino-acid chain: Serine--tRNA ligase (427 aa).

231–233 (TAE) provides a ligand contact to L-serine. Residues 262 to 264 (RRE) and V278 each bind ATP. E285 contacts L-serine. ATP is bound at residue 349–352 (EVSS). S384 contributes to the L-serine binding site.

Belongs to the class-II aminoacyl-tRNA synthetase family. Type-1 seryl-tRNA synthetase subfamily. In terms of assembly, homodimer. The tRNA molecule binds across the dimer.

It is found in the cytoplasm. It carries out the reaction tRNA(Ser) + L-serine + ATP = L-seryl-tRNA(Ser) + AMP + diphosphate + H(+). The catalysed reaction is tRNA(Sec) + L-serine + ATP = L-seryl-tRNA(Sec) + AMP + diphosphate + H(+). It functions in the pathway aminoacyl-tRNA biosynthesis; selenocysteinyl-tRNA(Sec) biosynthesis; L-seryl-tRNA(Sec) from L-serine and tRNA(Sec): step 1/1. Catalyzes the attachment of serine to tRNA(Ser). Is also able to aminoacylate tRNA(Sec) with serine, to form the misacylated tRNA L-seryl-tRNA(Sec), which will be further converted into selenocysteinyl-tRNA(Sec). This is Serine--tRNA ligase from Chlamydia pneumoniae (Chlamydophila pneumoniae).